The primary structure comprises 413 residues: Glutaminase (413 aa).

The segment at 23–307 (GELADYIPEL…LSDDMGLHLM (285 aa)) is glutaminase. Ser65, Asn114, Glu160, Asn167, Tyr191, Tyr243, and Val261 together coordinate substrate. One can recognise an STAS domain in the interval 316-413 (AVRSITRDGD…SDGTICKERV (98 aa)).

It belongs to the glutaminase family. In terms of assembly, homotetramer.

It catalyses the reaction L-glutamine + H2O = L-glutamate + NH4(+). This is Glutaminase (glsA) from Corynebacterium glutamicum (strain ATCC 13032 / DSM 20300 / JCM 1318 / BCRC 11384 / CCUG 27702 / LMG 3730 / NBRC 12168 / NCIMB 10025 / NRRL B-2784 / 534).